A 108-amino-acid chain; its full sequence is Abscisic stress-ripening protein 3 (108 aa).

2 disordered regions span residues 1 to 34 (MAEE…HHSH) and 84 to 108 (FAFH…GRHH). Residues 15 to 24 (NREEEGGPVD) are compositionally biased toward basic and acidic residues. Positions 25 to 34 (HKKKVKHHSH) are enriched in basic residues. The segment covering 95–108 (AKKEKKAAEKGRHH) has biased composition (basic and acidic residues).

The protein belongs to the abscisic acid and water stress-induced protein family.

The polypeptide is Abscisic stress-ripening protein 3 (Solanum lycopersicum (Tomato)).